We begin with the raw amino-acid sequence, 386 residues long: MNSVPSLPGQSVAAVVVAGGKGLRTGGPVPKQFVIWRGKPLLRHCVEALEAAGIAPIVVAIPAGWDEAATQALAGISMVRLVHGGATRQESVKAALEVLEGDAPARVLIHDAARPDLPGSVIERLLTALDKRTGAIPVLPVVDSMVRGSGDAMGETVAREDLYRVQTPQAFHYPAILAAHRAWQGEALAGDDAQVAMRAAHEIALVEGDEALRKVTFASDLEEQSMSVIPRTGMGFDVHRLVEGEELWLCGVNIPHGKGLSGHSDADVAIHALVDALLGAIAAGDIGDHFPPSDPQWKGASSDRFLAHAGTLVTEAGYRIANVDVTIICEAPKIGPHKAAMRETLARILGIDSALVSVKATTTERLGLTGRGEGIAAQAVATVVSG.

The 2-C-methyl-D-erythritol 4-phosphate cytidylyltransferase stretch occupies residues 1 to 230; that stretch reads MNSVPSLPGQ…LEEQSMSVIP (230 aa). The tract at residues 231 to 386 is 2-C-methyl-D-erythritol 2,4-cyclodiphosphate synthase; that stretch reads RTGMGFDVHR…AQAVATVVSG (156 aa). A divalent metal cation is bound by residues Asp-237 and His-239. 4-CDP-2-C-methyl-D-erythritol 2-phosphate is bound by residues 237 to 239 and 263 to 264; these read DVH and HS. His-271 provides a ligand contact to a divalent metal cation. 4-CDP-2-C-methyl-D-erythritol 2-phosphate-binding positions include 285 to 287, 361 to 364, and Arg-371; these read DIG and TTTE.

This sequence in the N-terminal section; belongs to the IspD/TarI cytidylyltransferase family. IspD subfamily. In the C-terminal section; belongs to the IspF family. A divalent metal cation serves as cofactor.

The enzyme catalyses 2-C-methyl-D-erythritol 4-phosphate + CTP + H(+) = 4-CDP-2-C-methyl-D-erythritol + diphosphate. It catalyses the reaction 4-CDP-2-C-methyl-D-erythritol 2-phosphate = 2-C-methyl-D-erythritol 2,4-cyclic diphosphate + CMP. It participates in isoprenoid biosynthesis; isopentenyl diphosphate biosynthesis via DXP pathway; isopentenyl diphosphate from 1-deoxy-D-xylulose 5-phosphate: step 2/6. The protein operates within isoprenoid biosynthesis; isopentenyl diphosphate biosynthesis via DXP pathway; isopentenyl diphosphate from 1-deoxy-D-xylulose 5-phosphate: step 4/6. In terms of biological role, bifunctional enzyme that catalyzes the formation of 4-diphosphocytidyl-2-C-methyl-D-erythritol from CTP and 2-C-methyl-D-erythritol 4-phosphate (MEP) (IspD), and catalyzes the conversion of 4-diphosphocytidyl-2-C-methyl-D-erythritol 2-phosphate (CDP-ME2P) to 2-C-methyl-D-erythritol 2,4-cyclodiphosphate (ME-CPP) with a corresponding release of cytidine 5-monophosphate (CMP) (IspF). The polypeptide is Bifunctional enzyme IspD/IspF (Novosphingobium aromaticivorans (strain ATCC 700278 / DSM 12444 / CCUG 56034 / CIP 105152 / NBRC 16084 / F199)).